A 202-amino-acid polypeptide reads, in one-letter code: SEAKLKEAAKETLKTTTDPLEKLRSHCLSQGYSGLLSLGRLFRRLDKDRSWTLSKEELSRGVGQFGLDLSDGDINKLFSSFEKDGQSGINYEEFLESLRPEMTEPRKKAVEAAFKHLDKTGDGVVGLEDIKGKYSAKTHPKVVKGEATEDEILKKFLNMFETNTSVDGKVTKKEFFDYYSGLSKAIDEDEYFVSMVNIMWXX.

Serine 1 is subject to N-acetylserine. 4 consecutive EF-hand domains span residues 33–68, 69–104, 105–140, and 148–185; these read SGLL…FGLD, LSDG…EMTE, PRKK…KTHP, and TEDE…LSKA. Ca(2+) contacts are provided by aspartate 84, glutamate 93, aspartate 118, aspartate 122, and aspartate 129.

Monomer or disulfide-linked dimers. Striated muscle and brain.

Functionally, possibly acts as a regulatory protein and not as a calcium buffer or transport protein. The chain is Crustacean calcium-binding protein 23 from Faxonius limosus (Spinycheek crayfish).